We begin with the raw amino-acid sequence, 233 residues long: Esterase FUS5 (233 aa).

Residues Ser105, Asp159, and His187 each act as charge relay system in the active site.

It belongs to the LovG family.

Its function is as follows. Esterase; part of the gene cluster that mediates the biosynthesis of the mycotoxin fusarin C. Within the cluster, FUS1, FUS2, FUS8 and FUS9 are sufficient for fusarin production. The other FUS cluster members are not essential for fusarin C biosynthesis. The chain is Esterase FUS5 from Gibberella moniliformis (strain M3125 / FGSC 7600) (Maize ear and stalk rot fungus).